The sequence spans 569 residues: F-box-like/WD repeat-containing protein TBL1X (569 aa).

One can recognise a LisH domain in the interval 55–87; sequence TSDEVNFLVYRYLQESGFSHSAFTFGIESHISQ. One can recognise an F-box-like domain in the interval 92 to 137; the sequence is GTLVPPAALISILQKGLQYVEAEISINEDGTVFDGRPIESLSLIDA. N6-acetyllysine is present on K153. The segment at 170-195 is disordered; it reads TSASVSQQNPSKNREATVNGEENRAH. S175 is subject to Phosphoserine. WD repeat units lie at residues 222-261, 278-317, 319-358, 361-401, 402-441, 444-492, 495-534, and 536-568; these read GHESEVFICAWNPVSDLLASGSGDSTARIWNLNENSNGGS, PSNKDVTSLDWNTNGTLLATGSYDGFARIWTEDGNLASTL, QHKGPIFALKWNRKGNYILSAGVDKTTIIWDAHTGEAKQQ, FHSA…KTFQ, GHTNEVNAIKWDPSGMLLASCSDDMTLKIWSMKQEVCIHD, AHNK…CTHT, KHQEPVYSVAFSPDGRYLASGSFDKCVHIWNTQSGNLVHS, and RGTGGIFEVCWNARGDKVGASASDGSVCVLDLR. A Glycyl lysine isopeptide (Lys-Gly) (interchain with G-Cter in SUMO2) cross-link involves residue K332.

It belongs to the WD repeat EBI family. As to quaternary structure, homotetramer; dimer of dimers. Component of the N-Cor repressor complex, at least composed of NCOR1, NCOR2, HDAC3, TBL1X, TBL1R, CORO2A and GPS2. Interacts with GPS2 (when sumoylated); leading to protect GPS2 against degradation by the proteasome. Component of a E3 ubiquitin ligase complex containing UBE2D1, SIAH1, CACYBP/SIP, SKP1, APC and TBL1X. Probably part of other corepressor complexes, that do not contain NCOR1 and NCOR2. Interacts with histones H2B, H3a and H4. Interacts with MECP2; recruits TBL1X to the heterochromatin foci. Interacts with USP44.

Its subcellular location is the nucleus. Its function is as follows. F-box-like protein involved in the recruitment of the ubiquitin/19S proteasome complex to nuclear receptor-regulated transcription units. Plays an essential role in transcription activation mediated by nuclear receptors. Probably acts as integral component of corepressor complexes that mediates the recruitment of the 19S proteasome complex, leading to the subsequent proteasomal degradation of transcription repressor complexes, thereby allowing cofactor exchange. The sequence is that of F-box-like/WD repeat-containing protein TBL1X (TBL1X) from Macaca fascicularis (Crab-eating macaque).